The sequence spans 527 residues: Probable T-complex protein 1 subunit beta (527 aa).

Belongs to the TCP-1 chaperonin family. As to quaternary structure, heterooligomeric complex of about 850 to 900 kDa that forms two stacked rings, 12 to 16 nm in diameter.

The protein localises to the cytoplasm. In terms of biological role, molecular chaperone; assists the folding of proteins upon ATP hydrolysis. Known to play a role, in vitro, in the folding of actin and tubulin. The sequence is that of Probable T-complex protein 1 subunit beta (cct2) from Schizosaccharomyces pombe (strain 972 / ATCC 24843) (Fission yeast).